Here is a 95-residue protein sequence, read N- to C-terminus: Aspartyl/glutamyl-tRNA(Asn/Gln) amidotransferase subunit C (95 aa).

The protein belongs to the GatC family. Heterotrimer of A, B and C subunits.

The enzyme catalyses L-glutamyl-tRNA(Gln) + L-glutamine + ATP + H2O = L-glutaminyl-tRNA(Gln) + L-glutamate + ADP + phosphate + H(+). The catalysed reaction is L-aspartyl-tRNA(Asn) + L-glutamine + ATP + H2O = L-asparaginyl-tRNA(Asn) + L-glutamate + ADP + phosphate + 2 H(+). In terms of biological role, allows the formation of correctly charged Asn-tRNA(Asn) or Gln-tRNA(Gln) through the transamidation of misacylated Asp-tRNA(Asn) or Glu-tRNA(Gln) in organisms which lack either or both of asparaginyl-tRNA or glutaminyl-tRNA synthetases. The reaction takes place in the presence of glutamine and ATP through an activated phospho-Asp-tRNA(Asn) or phospho-Glu-tRNA(Gln). The polypeptide is Aspartyl/glutamyl-tRNA(Asn/Gln) amidotransferase subunit C (Hydrogenovibrio crunogenus (strain DSM 25203 / XCL-2) (Thiomicrospira crunogena)).